Consider the following 498-residue polypeptide: Glycerol kinase (498 aa).

ADP is bound at residue T14. Residues T14, T15, and S16 each coordinate ATP. T14 contacts sn-glycerol 3-phosphate. R18 lines the ADP pocket. Sn-glycerol 3-phosphate contacts are provided by R84, E85, Y136, and D243. Residues R84, E85, Y136, D243, and Q244 each contribute to the glycerol site. 2 residues coordinate ADP: T265 and G308. Residues T265, G308, Q312, and G409 each coordinate ATP. Residues G409 and N413 each coordinate ADP.

This sequence belongs to the FGGY kinase family.

It carries out the reaction glycerol + ATP = sn-glycerol 3-phosphate + ADP + H(+). The protein operates within polyol metabolism; glycerol degradation via glycerol kinase pathway; sn-glycerol 3-phosphate from glycerol: step 1/1. With respect to regulation, inhibited by fructose 1,6-bisphosphate (FBP). Its function is as follows. Key enzyme in the regulation of glycerol uptake and metabolism. Catalyzes the phosphorylation of glycerol to yield sn-glycerol 3-phosphate. The sequence is that of Glycerol kinase from Shewanella frigidimarina (strain NCIMB 400).